The primary structure comprises 420 residues: MTSRALYSTRSQLCRHLAHKYLSRSYSTRPSLNEVVIVSAVRTPIGSFKGSLSTLPATKLGSIAIKGAIDKAGIPVEEVKEVYMGNVLQAGEGQAPTRQALLGAGLPLSTPATTINKVCASGMKSIMLASQSLMCGHQDVMVAGGMESMSQVPYIMAREAPPYGGVKMEDLIVKDGLTDVYNKFHMGNCAENTAKNSSISREEQDAFAIKSYTLSKAAWESGILAKEVVPVSIPQRGKPDVVVKEDEEYRKVDFSKVPKLKAVFLKENGTVTAANASTLNDGAAALVLMTADAAQRLNVTPLAKIVAFADAAVAPIDFPIAPAFAVPKVLKAAGIKKEDIAMWEINEAFSVVVLANIKMLDIDPDRVNINGGAVSLGHPIGMSGARIVGHMVHNLKSGQYGLAGICNGGGGASSIVIQKF.

A mitochondrion-targeting transit peptide spans 1–26 (MTSRALYSTRSQLCRHLAHKYLSRSY). Residue Cys-119 is the Acyl-thioester intermediate of the active site. CoA contacts are provided by residues Tyr-212, 251–253 (KVD), and Lys-256. Tyr-212 provides a ligand contact to K(+). The K(+) site is built by Ala-273, Ala-274, and Ala-276. CoA is bound at residue Ser-277. Residue Val-374 coordinates K(+). The Proton donor/acceptor role is filled by Cys-406.

This sequence belongs to the thiolase-like superfamily. Thiolase family. As to quaternary structure, homotetramer.

The protein localises to the mitochondrion. It carries out the reaction 2 acetyl-CoA = acetoacetyl-CoA + CoA. It catalyses the reaction propanoyl-CoA + acetyl-CoA = 2-methyl-3-oxobutanoyl-CoA + CoA. The protein operates within lipid metabolism; fatty acid beta-oxidation. In terms of biological role, this is one of the enzymes that catalyzes the last step of the mitochondrial beta-oxidation pathway, an aerobic process breaking down fatty acids into acetyl-CoA. Using free coenzyme A/CoA, catalyzes the thiolytic cleavage of medium- to long-chain 3-oxoacyl-CoAs into acetyl-CoA and a fatty acyl-CoA shortened by two carbon atoms. The activity of the enzyme is reversible and it can also catalyze the condensation of two acetyl-CoA molecules into acetoacetyl-CoA. Thereby, it plays a major role in ketone body metabolism. The protein is Acetyl-CoA acetyltransferase, mitochondrial (acat1) of Danio rerio (Zebrafish).